A 1057-amino-acid polypeptide reads, in one-letter code: Carbamoyl phosphate synthase large chain (1057 aa).

The tract at residues 1–401 (MPKRNDIKTI…SLLKAIRSLE (401 aa)) is carboxyphosphate synthetic domain. Residues Arg-129, Arg-169, Gly-175, Gly-176, Lys-208, Ile-210, Glu-215, Gly-241, Ile-242, His-243, Gln-284, and Glu-298 each contribute to the ATP site. The region spanning 133–327 (RTLMNDLNVP…IAKLAAKIAV (195 aa)) is the ATP-grasp 1 domain. The Mg(2+) site is built by Gln-284, Glu-298, and Asn-300. Residues Gln-284, Glu-298, and Asn-300 each contribute to the Mn(2+) site. Positions 402–546 (YGVHHLGLPN…YGTYETENES (145 aa)) are oligomerization domain. The interval 547-929 (IVTDKEKILV…ALFKGLTGSG (383 aa)) is carbamoyl phosphate synthetic domain. The 191-residue stretch at 671-861 (EALLRKINVP…MAQLAMRAII (191 aa)) folds into the ATP-grasp 2 domain. Residues Arg-707, Arg-746, Leu-748, Glu-752, Gly-777, Val-778, His-779, Ser-780, Gln-820, and Glu-832 each coordinate ATP. Positions 820, 832, and 834 each coordinate Mg(2+). Positions 820, 832, and 834 each coordinate Mn(2+). An MGS-like domain is found at 930 to 1057 (VEVKDHGTVL…ESMTFTMRQM (128 aa)). The allosteric domain stretch occupies residues 930–1057 (VEVKDHGTVL…ESMTFTMRQM (128 aa)).

Belongs to the CarB family. In terms of assembly, composed of two chains; the small (or glutamine) chain promotes the hydrolysis of glutamine to ammonia, which is used by the large (or ammonia) chain to synthesize carbamoyl phosphate. Tetramer of heterodimers (alpha,beta)4. Mg(2+) is required as a cofactor. It depends on Mn(2+) as a cofactor.

It catalyses the reaction hydrogencarbonate + L-glutamine + 2 ATP + H2O = carbamoyl phosphate + L-glutamate + 2 ADP + phosphate + 2 H(+). The catalysed reaction is hydrogencarbonate + NH4(+) + 2 ATP = carbamoyl phosphate + 2 ADP + phosphate + 2 H(+). Its pathway is amino-acid biosynthesis; L-arginine biosynthesis; carbamoyl phosphate from bicarbonate: step 1/1. It participates in pyrimidine metabolism; UMP biosynthesis via de novo pathway; (S)-dihydroorotate from bicarbonate: step 1/3. Functionally, large subunit of the glutamine-dependent carbamoyl phosphate synthetase (CPSase). CPSase catalyzes the formation of carbamoyl phosphate from the ammonia moiety of glutamine, carbonate, and phosphate donated by ATP, constituting the first step of 2 biosynthetic pathways, one leading to arginine and/or urea and the other to pyrimidine nucleotides. The large subunit (synthetase) binds the substrates ammonia (free or transferred from glutamine from the small subunit), hydrogencarbonate and ATP and carries out an ATP-coupled ligase reaction, activating hydrogencarbonate by forming carboxy phosphate which reacts with ammonia to form carbamoyl phosphate. This Staphylococcus aureus (strain MW2) protein is Carbamoyl phosphate synthase large chain.